Consider the following 279-residue polypeptide: Diaminopimelate epimerase (279 aa).

Substrate is bound by residues asparagine 13 and asparagine 66. The active-site Proton donor is the cysteine 75. Substrate-binding positions include 76–77 (GN), asparagine 164, asparagine 197, and 215–216 (ER). The active-site Proton acceptor is the cysteine 224. 225–226 (GT) contacts substrate.

This sequence belongs to the diaminopimelate epimerase family. As to quaternary structure, homodimer.

The protein localises to the cytoplasm. The enzyme catalyses (2S,6S)-2,6-diaminopimelate = meso-2,6-diaminopimelate. The protein operates within amino-acid biosynthesis; L-lysine biosynthesis via DAP pathway; DL-2,6-diaminopimelate from LL-2,6-diaminopimelate: step 1/1. In terms of biological role, catalyzes the stereoinversion of LL-2,6-diaminopimelate (L,L-DAP) to meso-diaminopimelate (meso-DAP), a precursor of L-lysine and an essential component of the bacterial peptidoglycan. The protein is Diaminopimelate epimerase of Nostoc punctiforme (strain ATCC 29133 / PCC 73102).